A 339-amino-acid chain; its full sequence is U11/U12 small nuclear ribonucleoprotein 48 kDa protein (339 aa).

A CHHC U11-48K-type zinc finger spans residues 55–82; that stretch reads VVICPYDSNHHMPKSSLAKHMASCRLRK. Residues cysteine 58, histidine 64, histidine 74, and cysteine 78 each contribute to the Zn(2+) site. Residues lysine 87 and lysine 104 each participate in a glycyl lysine isopeptide (Lys-Gly) (interchain with G-Cter in SUMO2) cross-link. Residues 255-339 form a disordered region; the sequence is HWQEEQEKAE…HSHKRRKQKI (85 aa). Basic residues predominate over residues 294–309; that stretch reads RHRRDRSRSPHKRKRN. Residues 310 to 328 are compositionally biased toward basic and acidic residues; it reads KDKDKNCESRRRKERDGER. Residues 329–339 are compositionally biased toward basic residues; sequence HHSHKRRKQKI.

Component of the U11/U12 snRNPs that are part of the U12-type spliceosome. Not found in the major spliceosome.

It is found in the nucleus. Its function is as follows. Likely involved in U12-type 5' splice site recognition. The chain is U11/U12 small nuclear ribonucleoprotein 48 kDa protein (SNRNP48) from Homo sapiens (Human).